A 693-amino-acid polypeptide reads, in one-letter code: MSLAQQINRVVAPFEVISEYQPAGDQPAAIADLTERINNGEKDVVLLGATGTGKSATTAWLIEQVQRPTLVMVQNKTLAAQLANEFRELLPNNAVEYFVSYYDYYQPEAYVPQTDTFIEKDSSVNEEVERLRYSATNSLLTRRDVIVVATVSCIYGLGTPEEYVAGMVTLKQGDRVDRDQLLRQFVGIQYTRNDIDFHRGTFRVRGDTVEITPMYEEQALRIEFFGDEIEKIFTLHPLTGEIIREENEMYVFPASHYVAGPERMAKAITRIEDELAVRLKELEGQNKLLEAQRLRMRTTYDLEMMQQMGFCNGIENYSRHIDGRDSGSAPSCLIDYFPDDFLLVIDESHVTLPQIGAMYEGDMSRKRTLVDHGFRLPSAMDNRPLKWDEFLERVGQTVYLSATPGKYEMAKADGVVQQIIRPTGLIDPEVIIKPTKGQIDDLLGEIRTRVERDERVLVTTLTKRMAEDLTEYLLGHGVKVQYLHSDVDTLRRVELLRELRLGVFDVLVGINLLREGLDLPEVSLVSILDADKEGFLRSATSLIQTIGRAARNVSGEVHMYADKITDSMAKAIDETNRRRAIQVAYNTEHGVDPTPLRKRIADITDSLAREDADTKSLLESAGKGRSRGKAPVPVRHDGLAAVPAEDLVDLIEQLTAQMHSAAGELQFELAARLRDEVGDLKKELRQMQSAGHA.

One can recognise a Helicase ATP-binding domain in the interval 35–188 (ERINNGEKDV…DQLLRQFVGI (154 aa)). Residue 48–55 (GATGTGKS) coordinates ATP. Positions 101-124 (YYDYYQPEAYVPQTDTFIEKDSSV) match the Beta-hairpin motif. The region spanning 438 to 600 (QIDDLLGEIR…VDPTPLRKRI (163 aa)) is the Helicase C-terminal domain. The disordered stretch occupies residues 612-634 (ADTKSLLESAGKGRSRGKAPVPV). Positions 648–683 (VDLIEQLTAQMHSAAGELQFELAARLRDEVGDLKKE) constitute a UVR domain.

The protein belongs to the UvrB family. In terms of assembly, forms a heterotetramer with UvrA during the search for lesions. Interacts with UvrC in an incision complex.

It localises to the cytoplasm. Functionally, the UvrABC repair system catalyzes the recognition and processing of DNA lesions. A damage recognition complex composed of 2 UvrA and 2 UvrB subunits scans DNA for abnormalities. Upon binding of the UvrA(2)B(2) complex to a putative damaged site, the DNA wraps around one UvrB monomer. DNA wrap is dependent on ATP binding by UvrB and probably causes local melting of the DNA helix, facilitating insertion of UvrB beta-hairpin between the DNA strands. Then UvrB probes one DNA strand for the presence of a lesion. If a lesion is found the UvrA subunits dissociate and the UvrB-DNA preincision complex is formed. This complex is subsequently bound by UvrC and the second UvrB is released. If no lesion is found, the DNA wraps around the other UvrB subunit that will check the other stand for damage. The polypeptide is UvrABC system protein B (Renibacterium salmoninarum (strain ATCC 33209 / DSM 20767 / JCM 11484 / NBRC 15589 / NCIMB 2235)).